The sequence spans 817 residues: Transcription factor yanR (817 aa).

The segment at residues 19 to 46 (CIVCRRRKVRCGREHPECANCVRMKENC) is a DNA-binding region (zn(2)-C6 fungal-type). Disordered stretches follow at residues 102–161 (GNVL…PQVD), 180–218 (HHAS…YSGL), and 733–775 (SLSS…VADS). Pro residues predominate over residues 113–127 (LPRPTISPASAPPPQ). The segment covering 146–158 (SSTILTPAPSSHP) has biased composition (polar residues). Residues 184-195 (SRAGTSRTSSVS) show a composition bias toward low complexity. Composition is skewed to polar residues over residues 208-217 (APSTSTSYSG) and 748-760 (EAPS…QMPS).

It localises to the nucleus. Transcription factor that regulates the expression of the gene cluster that mediates the biosynthesis of yanuthone D, a fungal isoprenoid epoxycyclohexenone that acts as an antibiotic against fungi and bacteria. The sequence is that of Transcription factor yanR from Aspergillus niger (strain ATCC 1015 / CBS 113.46 / FGSC A1144 / LSHB Ac4 / NCTC 3858a / NRRL 328 / USDA 3528.7).